The sequence spans 288 residues: Phenazine biosynthesis-like domain-containing protein 2 (288 aa).

The active site involves E46.

It belongs to the PhzF family.

The protein is Phenazine biosynthesis-like domain-containing protein 2 (Pbld2) of Mus musculus (Mouse).